We begin with the raw amino-acid sequence, 331 residues long: Nucleotide sugar transporter SLC35B4 (331 aa).

11 consecutive transmembrane segments (helical) span residues 4 to 24 (ALAV…LELL), 30 to 50 (GCGN…GFLF), 59 to 79 (PAIP…VSVV), 92 to 112 (LHMI…IIIL), 117 to 137 (SIFK…CTFM), 153 to 173 (GFQA…ALLM), 201 to 221 (ALPL…AVLF), 229 to 249 (IPVI…NIIT), 251 to 267 (YVCI…CASL), 268 to 288 (TVTL…ILYF), and 291 to 311 (PFTL…LMYT). The Mediates endoplasmic reticulum retention motif lies at 326–331 (KDSKKN).

It belongs to the nucleotide-sugar transporter family. SLC35B subfamily.

It is found in the endoplasmic reticulum membrane. It catalyses the reaction UDP-N-acetyl-alpha-D-glucosamine(in) + UDP-alpha-D-glucuronate(out) = UDP-N-acetyl-alpha-D-glucosamine(out) + UDP-alpha-D-glucuronate(in). It carries out the reaction UDP-alpha-D-xylose(in) + UDP-alpha-D-glucuronate(out) = UDP-alpha-D-xylose(out) + UDP-alpha-D-glucuronate(in). Its function is as follows. Antiporter that transports nucleotide sugars across the endoplasmic reticulum (ER) membrane in exchange for another nucleotide sugar. May couple UDP-alpha-D-glucuronate (UDP-GlcA) or UDP-alpha-D-xylose (UDP-Xyl) efflux to UDP-alpha-D-glucuronate (UDP-GlcA) influx into the ER lumen, which in turn stimulates glucuronidation and excretion of endobiotics and xenobiotics. Has UDP-GlcA:UDP-GlcNAc antiporter activity. This is Nucleotide sugar transporter SLC35B4 (SLC35B4) from Homo sapiens (Human).